We begin with the raw amino-acid sequence, 218 residues long: Outer-membrane lipoprotein LolB (218 aa).

The first 20 residues, 1 to 20 (MSQVIRTLALTGLALAGLSG), serve as a signal peptide directing secretion. Cys-21 carries the N-palmitoyl cysteine lipid modification. Residue Cys-21 is the site of S-diacylglycerol cysteine attachment.

This sequence belongs to the LolB family. As to quaternary structure, monomer.

Its subcellular location is the cell outer membrane. Functionally, plays a critical role in the incorporation of lipoproteins in the outer membrane after they are released by the LolA protein. This Xanthomonas campestris pv. campestris (strain B100) protein is Outer-membrane lipoprotein LolB.